The primary structure comprises 273 residues: Large ribosomal subunit protein uL2 (273 aa).

The tract at residues 213-261 (WLGKRPQSRGVAMNPVDHPHGGGEGKSSGGRHPVTPWGVPTKGYKTRVN) is disordered.

This sequence belongs to the universal ribosomal protein uL2 family. As to quaternary structure, part of the 50S ribosomal subunit. Forms a bridge to the 30S subunit in the 70S ribosome.

Functionally, one of the primary rRNA binding proteins. Required for association of the 30S and 50S subunits to form the 70S ribosome, for tRNA binding and peptide bond formation. It has been suggested to have peptidyltransferase activity; this is somewhat controversial. Makes several contacts with the 16S rRNA in the 70S ribosome. The sequence is that of Large ribosomal subunit protein uL2 from Syntrophotalea carbinolica (strain DSM 2380 / NBRC 103641 / GraBd1) (Pelobacter carbinolicus).